Consider the following 137-residue polypeptide: Large ribosomal subunit protein uL16 (137 aa).

The protein belongs to the universal ribosomal protein uL16 family. As to quaternary structure, part of the 50S ribosomal subunit.

Functionally, binds 23S rRNA and is also seen to make contacts with the A and possibly P site tRNAs. This is Large ribosomal subunit protein uL16 from Agrobacterium fabrum (strain C58 / ATCC 33970) (Agrobacterium tumefaciens (strain C58)).